We begin with the raw amino-acid sequence, 460 residues long: Methylenetetrahydrofolate--tRNA-(uracil-5-)-methyltransferase TrmFO (460 aa).

FAD is bound at residue 12–17 (GGGLAG).

It belongs to the MnmG family. TrmFO subfamily. It depends on FAD as a cofactor.

It localises to the cytoplasm. It carries out the reaction uridine(54) in tRNA + (6R)-5,10-methylene-5,6,7,8-tetrahydrofolate + NADH + H(+) = 5-methyluridine(54) in tRNA + (6S)-5,6,7,8-tetrahydrofolate + NAD(+). The enzyme catalyses uridine(54) in tRNA + (6R)-5,10-methylene-5,6,7,8-tetrahydrofolate + NADPH + H(+) = 5-methyluridine(54) in tRNA + (6S)-5,6,7,8-tetrahydrofolate + NADP(+). In terms of biological role, catalyzes the folate-dependent formation of 5-methyl-uridine at position 54 (M-5-U54) in all tRNAs. The sequence is that of Methylenetetrahydrofolate--tRNA-(uracil-5-)-methyltransferase TrmFO from Crocosphaera subtropica (strain ATCC 51142 / BH68) (Cyanothece sp. (strain ATCC 51142)).